A 192-amino-acid polypeptide reads, in one-letter code: A-type ATP synthase subunit E (192 aa).

This sequence belongs to the V-ATPase E subunit family. As to quaternary structure, has multiple subunits with at least A(3), B(3), C, D, E, F, H, I and proteolipid K(x).

The protein localises to the cell membrane. In terms of biological role, component of the A-type ATP synthase that produces ATP from ADP in the presence of a proton gradient across the membrane. The sequence is that of A-type ATP synthase subunit E from Metallosphaera sedula (strain ATCC 51363 / DSM 5348 / JCM 9185 / NBRC 15509 / TH2).